Here is a 631-residue protein sequence, read N- to C-terminus: DNA mismatch repair protein MutL (631 aa).

This sequence belongs to the DNA mismatch repair MutL/HexB family.

In terms of biological role, this protein is involved in the repair of mismatches in DNA. It is required for dam-dependent methyl-directed DNA mismatch repair. May act as a 'molecular matchmaker', a protein that promotes the formation of a stable complex between two or more DNA-binding proteins in an ATP-dependent manner without itself being part of a final effector complex. This chain is DNA mismatch repair protein MutL, found in Lactobacillus acidophilus (strain ATCC 700396 / NCK56 / N2 / NCFM).